The primary structure comprises 324 residues: Beta-ketoacyl-[acyl-carrier-protein] synthase III (324 aa).

Residues Cys-112 and His-249 contribute to the active site. The ACP-binding stretch occupies residues 250-254 (QANDR). Asn-279 is a catalytic residue.

This sequence belongs to the thiolase-like superfamily. FabH family. In terms of assembly, homodimer.

It localises to the cytoplasm. The enzyme catalyses malonyl-[ACP] + acetyl-CoA + H(+) = 3-oxobutanoyl-[ACP] + CO2 + CoA. It functions in the pathway lipid metabolism; fatty acid biosynthesis. In terms of biological role, catalyzes the condensation reaction of fatty acid synthesis by the addition to an acyl acceptor of two carbons from malonyl-ACP. Catalyzes the first condensation reaction which initiates fatty acid synthesis and may therefore play a role in governing the total rate of fatty acid production. Possesses both acetoacetyl-ACP synthase and acetyl transacylase activities. Its substrate specificity determines the biosynthesis of branched-chain and/or straight-chain of fatty acids. This chain is Beta-ketoacyl-[acyl-carrier-protein] synthase III, found in Streptococcus pneumoniae serotype 19F (strain G54).